A 273-amino-acid polypeptide reads, in one-letter code: Formamidopyrimidine-DNA glycosylase (273 aa).

The active-site Schiff-base intermediate with DNA is Pro-2. Glu-3 functions as the Proton donor in the catalytic mechanism. The active-site Proton donor; for beta-elimination activity is the Lys-58. Residues His-91, Arg-110, and Arg-153 each contribute to the DNA site. Residues Lys-238–Lys-272 form an FPG-type zinc finger. Residue Arg-262 is the Proton donor; for delta-elimination activity of the active site.

Belongs to the FPG family. Monomer. Requires Zn(2+) as cofactor.

The enzyme catalyses Hydrolysis of DNA containing ring-opened 7-methylguanine residues, releasing 2,6-diamino-4-hydroxy-5-(N-methyl)formamidopyrimidine.. It carries out the reaction 2'-deoxyribonucleotide-(2'-deoxyribose 5'-phosphate)-2'-deoxyribonucleotide-DNA = a 3'-end 2'-deoxyribonucleotide-(2,3-dehydro-2,3-deoxyribose 5'-phosphate)-DNA + a 5'-end 5'-phospho-2'-deoxyribonucleoside-DNA + H(+). Functionally, involved in base excision repair of DNA damaged by oxidation or by mutagenic agents. Acts as a DNA glycosylase that recognizes and removes damaged bases. Has a preference for oxidized purines, such as 7,8-dihydro-8-oxoguanine (8-oxoG). Has AP (apurinic/apyrimidinic) lyase activity and introduces nicks in the DNA strand. Cleaves the DNA backbone by beta-delta elimination to generate a single-strand break at the site of the removed base with both 3'- and 5'-phosphates. The polypeptide is Formamidopyrimidine-DNA glycosylase (Lactobacillus delbrueckii subsp. bulgaricus (strain ATCC 11842 / DSM 20081 / BCRC 10696 / JCM 1002 / NBRC 13953 / NCIMB 11778 / NCTC 12712 / WDCM 00102 / Lb 14)).